A 111-amino-acid chain; its full sequence is MISTVALFWALCVVCVVNMARYYSSLRALLVVLRGCDPLLYQYVDGGGFFTSHGQPSKQIRLVGYIFAQRYLDHHDPEFIRRCERLRGQFILTSALCGLVVVSLVALMLWY.

The next 2 membrane-spanning stretches (helical) occupy residues 1 to 21 (MISTVALFWALCVVCVVNMAR) and 90 to 110 (FILTSALCGLVVVSLVALMLW).

It belongs to the universal stress protein B family.

It localises to the cell inner membrane. This is Universal stress protein B from Yersinia pseudotuberculosis serotype O:1b (strain IP 31758).